Consider the following 660-residue polypeptide: Zinc transporter ZIP4 (660 aa).

A signal peptide spans methionine 1–alanine 22. At arginine 23–tyrosine 337 the chain is on the extracellular side. 3 cysteine pairs are disulfide-bonded: cysteine 56/cysteine 61, cysteine 64/cysteine 110, and cysteine 160/cysteine 195. N-linked (GlcNAc...) asparagine glycosylation is found at asparagine 192 and asparagine 219. Residues glycine 233–serine 273 form a disordered region. Over residues glycine 236–threonine 267 the composition is skewed to basic and acidic residues. N-linked (GlcNAc...) asparagine glycosylation occurs at asparagine 272. Cysteine 280 and cysteine 319 are joined by a disulfide. Residues leucine 338–leucine 358 traverse the membrane as a helical segment. The Cytoplasmic portion of the chain corresponds to threonine 359–serine 376. A helical transmembrane segment spans residues leucine 377 to leucine 397. Over histidine 398 to arginine 420 the chain is Extracellular. Residues leucine 421–leucine 441 form a helical membrane-spanning segment. The Cytoplasmic segment spans residues leucine 442–tyrosine 511. Positions leucine 465–leucine 467 match the Essential for SLC39A4 endocytosis motif. A helical membrane pass occupies residues leucine 512–alanine 531. Zn(2+) is bound by residues histidine 520, asparagine 521, and aspartate 524. Residues phenylalanine 532–glycine 539 are Extracellular-facing. The helical transmembrane segment at leucine 540–leucine 566 threads the bilayer. Zn(2+) is bound by residues histidine 549, glutamate 550, and histidine 553. The Cytoplasmic segment spans residues serine 567–alanine 571. The helical transmembrane segment at leucine 572–valine 592 threads the bilayer. The Extracellular portion of the chain corresponds to glycine 593–glutamate 599. Residues alanine 600–proline 620 traverse the membrane as a helical segment. The Cytoplasmic segment spans residues alanine 621 to proline 630. The helical transmembrane segment at tryptophan 631 to leucine 651 threads the bilayer. Residues serine 652 to phenylalanine 660 lie on the Extracellular side of the membrane. Asparagine 657 carries N-linked (GlcNAc...) asparagine glycosylation.

It belongs to the ZIP transporter (TC 2.A.5) family. As to quaternary structure, homodimer. Homodimerization is mediated by the transmembrane domain. Post-translationally, the extracellular N-terminal ectodomain is cleaved when cells are Zn(2+) deficient, N-terminally cleaved SLC39A4 is then internalized faster. Under excess Zn(2+) conditions, SLC39A4 on the cell surface is rapidly endocytosed, ubiquitinated, and degraded. In terms of processing, N-glycosylated. Highly expressed in the small intestine and embryonic visceral yolk sac. Weakly expressed in the stomach and liver.

The protein localises to the cell membrane. The protein resides in the recycling endosome membrane. It is found in the apical cell membrane. The enzyme catalyses Zn(2+)(in) = Zn(2+)(out). In terms of biological role, selective transporter that mediates the uptake of Zn(2+). Plays an essential role for dietary zinc uptake from small intestine. The Zn(2+) uniporter activity is regulated by zinc availability. Also exhibits polyspecific binding and transport of Cu(2+), Cd(2+) and possibly Ni(2+) but at higher concentrations. The chain is Zinc transporter ZIP4 (Slc39a4) from Mus musculus (Mouse).